A 580-amino-acid polypeptide reads, in one-letter code: NADH-ubiquinone oxidoreductase chain 5 (580 aa).

Transmembrane regions (helical) follow at residues 12-32 (FYFLMSISLSLFLISLKFLLM), 50-70 (IVMTFLFDWMSLMFMSFVLLI), 92-112 (ILLVLMFVMSMMMLIISPNLI), 113-133 (SILLGWDGLGLVSYCLVIYFQ), 153-173 (VALLLAIAWMLNYGSWNYIFY), 183-203 (MMIIGGLVMLAAMTKSAQIPF), 215-235 (TPVSALVHSSTLVTAGVYLLI), 244-264 (WWMAQFLLLVSGLTMFMAGLG), 274-293 (IIALSTLSQLGLMMSILSMG), 298-320 (AFFHLLTHALFKALLFMCAGSII), 343-363 (CSCFNVANLALCGMPFLAGFY), 367-387 (LILEMVMLSYVNVFSFFLFFF), 427-447 (ICFLTVMAVIGGSMLSWLMFL), 463-483 (LFVCIVGGLMGYLISDVKLFF), 496-516 (FVGSMWFMPVISTLGVINYPL), and 560-580 (IYLLSYMLWFIILLMLVVLVN).

Belongs to the complex I subunit 5 family.

The protein resides in the mitochondrion inner membrane. The catalysed reaction is a ubiquinone + NADH + 5 H(+)(in) = a ubiquinol + NAD(+) + 4 H(+)(out). Core subunit of the mitochondrial membrane respiratory chain NADH dehydrogenase (Complex I) that is believed to belong to the minimal assembly required for catalysis. Complex I functions in the transfer of electrons from NADH to the respiratory chain. The immediate electron acceptor for the enzyme is believed to be ubiquinone. The sequence is that of NADH-ubiquinone oxidoreductase chain 5 (mt:ND5) from Anopheles gambiae (African malaria mosquito).